We begin with the raw amino-acid sequence, 214 residues long: EEF1A lysine methyltransferase 1 (214 aa).

N-acetylserine is present on S2. The residue at position 2 (S2) is a Phosphoserine.

This sequence belongs to the class I-like SAM-binding methyltransferase superfamily. EFM5 family.

Its subcellular location is the cytoplasm. The catalysed reaction is L-lysyl-[protein] + 3 S-adenosyl-L-methionine = N(6),N(6),N(6)-trimethyl-L-lysyl-[protein] + 3 S-adenosyl-L-homocysteine + 3 H(+). Functionally, protein-lysine methyltransferase that selectively catalyzes the trimethylation of EEF1A at 'Lys-79'. The sequence is that of EEF1A lysine methyltransferase 1 from Mus musculus (Mouse).